The sequence spans 264 residues: Small ribosomal subunit protein uS3 (264 aa).

The region spanning 39–107 is the KH type-2 domain; the sequence is VREYLKKKLK…PVHVNIEEIR (69 aa). Residues 217 to 264 form a disordered region; it reads EEVAEEKRPRRNARPGDRRPRRDGEGAPAGARRGAPRRGGAGDGKTGE. The span at 230–241 shows a compositional bias: basic and acidic residues; the sequence is RPGDRRPRRDGE. A compositionally biased stretch (gly residues) spans 253–264; sequence RRGGAGDGKTGE.

The protein belongs to the universal ribosomal protein uS3 family. In terms of assembly, part of the 30S ribosomal subunit. Forms a tight complex with proteins S10 and S14.

Functionally, binds the lower part of the 30S subunit head. Binds mRNA in the 70S ribosome, positioning it for translation. This chain is Small ribosomal subunit protein uS3, found in Paraburkholderia phymatum (strain DSM 17167 / CIP 108236 / LMG 21445 / STM815) (Burkholderia phymatum).